Consider the following 2543-residue polypeptide: Polyketide synthase PksR (2543 aa).

Positions 165–269 are methyltransferase; sequence LEIGAGTGGT…KAVLKKNGLL (105 aa). Residues 376–452 enclose the Carrier 1 domain; the sequence is SLIEQTAQFV…ELVEYLVKGH (77 aa). S413 carries the O-(pantetheine 4'-phosphoryl)serine modification. The segment at 465 to 485 is disordered; that stretch reads TKPAKNEAPLQTERTDPNKPF. The Ketosynthase family 3 (KS3) 1 domain maps to 527 to 959; the sequence is TEDIAIIGVS…GAYANLIIEE (433 aa). C700 acts as the For beta-ketoacyl synthase 1 activity in catalysis. The interval 1114 to 1242 is N-terminal hotdog fold; it reads HFDVSSINEK…GQCGIGSFEP (129 aa). Residues 1114–1397 enclose the PKS/mFAS DH domain; the sequence is HFDVSSINEK…LKQLRISNQR (284 aa). The segment at 1255-1397 is C-terminal hotdog fold; sequence TKLHHIDQMY…LKQLRISNQR (143 aa). A Carrier 2 domain is found at 1407–1485; the sequence is SNLKARIRSY…ELIDFFADKH (79 aa). S1445 carries the O-(pantetheine 4'-phosphoryl)serine modification. In terms of domain architecture, Ketosynthase family 3 (KS3) 2 spans 1528–1946; it reads ADGIAIIGMS…GVNAHVILEE (419 aa). Active-site for beta-ketoacyl synthase 2 activity residues include C1680, H1815, and H1862. The Carrier 3 domain maps to 2134 to 2208; sequence RINNSSDHHI…DMMDLIAKKQ (75 aa). O-(pantetheine 4'-phosphoryl)serine is present on S2168. Positions 2234–2514 are thioesterase; sequence RPVFWFHGGV…EFCEKLYSNR (281 aa).

It depends on pantetheine 4'-phosphate as a cofactor.

Its subcellular location is the cytoplasm. The protein operates within antibiotic biosynthesis; bacillaene biosynthesis. Its function is as follows. Involved in some intermediate steps for the synthesis of the antibiotic polyketide bacillaene which is involved in secondary metabolism. The chain is Polyketide synthase PksR (pksR) from Bacillus subtilis (strain 168).